The primary structure comprises 411 residues: CinA-like protein (411 aa).

It belongs to the CinA family.

This Dictyoglomus turgidum (strain DSM 6724 / Z-1310) protein is CinA-like protein.